Consider the following 233-residue polypeptide: Large ribosomal subunit protein uL1 (233 aa).

Belongs to the universal ribosomal protein uL1 family. In terms of assembly, part of the 50S ribosomal subunit.

Functionally, binds directly to 23S rRNA. The L1 stalk is quite mobile in the ribosome, and is involved in E site tRNA release. In terms of biological role, protein L1 is also a translational repressor protein, it controls the translation of the L11 operon by binding to its mRNA. In Brucella melitensis biotype 1 (strain ATCC 23456 / CCUG 17765 / NCTC 10094 / 16M), this protein is Large ribosomal subunit protein uL1.